The primary structure comprises 548 residues: Probable malate:quinone oxidoreductase (548 aa).

A disordered region spans residues 522 to 548; that stretch reads KPQAADSTPKPQLKPKPVQKEVADIAL. A compositionally biased stretch (basic and acidic residues) spans 539 to 548; sequence VQKEVADIAL.

It belongs to the MQO family. FAD is required as a cofactor.

It catalyses the reaction (S)-malate + a quinone = a quinol + oxaloacetate. It participates in carbohydrate metabolism; tricarboxylic acid cycle; oxaloacetate from (S)-malate (quinone route): step 1/1. The sequence is that of Probable malate:quinone oxidoreductase from Escherichia coli O9:H4 (strain HS).